Reading from the N-terminus, the 357-residue chain is Alanine racemase, catabolic (357 aa).

Lysine 33 (proton acceptor; specific for D-alanine) is an active-site residue. N6-(pyridoxal phosphate)lysine is present on lysine 33. Arginine 129 provides a ligand contact to substrate. Catalysis depends on tyrosine 253, which acts as the Proton acceptor; specific for L-alanine. Methionine 301 contacts substrate.

Belongs to the alanine racemase family. Pyridoxal 5'-phosphate is required as a cofactor.

It catalyses the reaction L-alanine = D-alanine. It participates in amino-acid biosynthesis; D-alanine biosynthesis; D-alanine from L-alanine: step 1/1. Its function is as follows. Isomerizes L-alanine to D-alanine which is then likely oxidized to pyruvate by DadA. Shows racemase activity with both alanine stereoisomers, negligible activity with D-cysteine and L-serine, and exhibits no activity with the remaining natural chiral amino acids. This chain is Alanine racemase, catabolic, found in Pseudomonas putida (strain ATCC 47054 / DSM 6125 / CFBP 8728 / NCIMB 11950 / KT2440).